We begin with the raw amino-acid sequence, 1520 residues long: Putative lipoprotein AcfD homolog (1520 aa).

Positions 1-23 (MNKKFKYKKSLLAAILSATLLAG) are cleaved as a signal peptide. 2 disordered regions span residues 22–107 (AGCD…GATC) and 226–247 (NAAT…TTPG). A lipid anchor (N-palmitoyl cysteine) is attached at cysteine 24. The S-diacylglycerol cysteine moiety is linked to residue cysteine 24. A compositionally biased stretch (low complexity) spans 31–42 (SSSDTPPVDSGT). Residues 51 to 77 (DPTPNPEPTPEPTPDPEPTPEPIPDPE) are compositionally biased toward pro residues. A compositionally biased stretch (polar residues) spans 97-107 (GGSQRVTGATC). Over residues 234–247 (STHTSPVVPVTTPG) the composition is skewed to low complexity. One can recognise a Peptidase M60 domain in the interval 1081-1381 (GNMQSTGLWA…MYAQLKEWAE (301 aa)). Residues 1498–1520 (DLPKPEQGPETINQVTEHKMSAE) are disordered.

The protein to V.cholerae AcfD (VC_0845).

Its subcellular location is the cell inner membrane. In terms of biological role, involved in a type II secretion system (T2SS, formerly general secretion pathway, GSP) for the export of folded proteins across the outer membrane. In Escherichia coli (strain K12), this protein is Putative lipoprotein AcfD homolog (yghJ).